The chain runs to 393 residues: Putative competence-damage inducible protein (393 aa).

This sequence belongs to the CinA family.

This Streptococcus suis (strain 98HAH33) protein is Putative competence-damage inducible protein.